Here is a 436-residue protein sequence, read N- to C-terminus: Enolase (436 aa).

Gln-163 lines the (2R)-2-phosphoglycerate pocket. Catalysis depends on Glu-205, which acts as the Proton donor. Positions 242, 285, and 312 each coordinate Mg(2+). (2R)-2-phosphoglycerate contacts are provided by Lys-337, Arg-366, Ser-367, and Lys-388. The Proton acceptor role is filled by Lys-337.

This sequence belongs to the enolase family. The cofactor is Mg(2+).

Its subcellular location is the cytoplasm. The protein localises to the secreted. The protein resides in the cell surface. The catalysed reaction is (2R)-2-phosphoglycerate = phosphoenolpyruvate + H2O. It functions in the pathway carbohydrate degradation; glycolysis; pyruvate from D-glyceraldehyde 3-phosphate: step 4/5. Catalyzes the reversible conversion of 2-phosphoglycerate (2-PG) into phosphoenolpyruvate (PEP). It is essential for the degradation of carbohydrates via glycolysis. The protein is Enolase of Solidesulfovibrio magneticus (strain ATCC 700980 / DSM 13731 / RS-1) (Desulfovibrio magneticus).